The primary structure comprises 586 residues: Solute carrier family 13 member 2 (586 aa).

Helical transmembrane passes span Ser-13–Thr-33, Ala-53–Met-73, and Thr-86–His-106. The span at Asp-165–Phe-175 shows a compositional bias: polar residues. Residues Asp-165–His-209 form a disordered region. The next 9 membrane-spanning stretches (helical) occupy residues Gly-215–Thr-235, Phe-264–Phe-284, Pro-319–Phe-339, Gly-366–Leu-386, Thr-407–Ala-427, Pro-445–Phe-465, Phe-478–Leu-498, Leu-506–Leu-526, and Gly-535–Ile-555.

The protein belongs to the SLC13A/DASS transporter (TC 2.A.47) family. NADC subfamily. In terms of tissue distribution, highly expressed in kidney and small intestine. Not detectable in brain, heart, stomach and skeletal muscle.

It is found in the apical cell membrane. It carries out the reaction succinate(out) + 3 Na(+)(out) = succinate(in) + 3 Na(+)(in). The enzyme catalyses fumarate(out) + 3 Na(+)(out) = fumarate(in) + 3 Na(+)(in). The catalysed reaction is 2-oxoglutarate(out) + 3 Na(+)(out) = 2-oxoglutarate(in) + 3 Na(+)(in). Its activity is regulated as follows. Li(+) decreases succinate transport in the presence of Na(+), by competing at one of the three cation binding sites. Low-affinity sodium-dicarboxylate cotransporter, that mediates the entry of citric acid cycle intermediates, such as succinate, citrate, fumarate and alpha-ketoglutarate (2-oxoglutarate) into the small intestine and renal proximal tubule. Can transport citrate in a Na(+)-dependent manner, recognizing the divalent form of citrate rather than the trivalent form which is normally found in blood. Transports the dicarboxylate into the cell with a probable stoichiometry of 3 Na(+) for 1 divalent dicarboxylate, rendering the process electrogenic. Has a critical role in renal dicarboxylate transport. The protein is Solute carrier family 13 member 2 (Slc13a2) of Mus musculus (Mouse).